The following is a 379-amino-acid chain: Succinate--CoA ligase [ADP-forming] subunit beta (379 aa).

Residues 9–235 form the ATP-grasp domain; it reads KEIAKNNGIP…GRELSEMEAI (227 aa). Residues K45, E91, I94, and E99 each coordinate ATP. Mg(2+) is bound by residues N191 and D205. Substrate contacts are provided by residues N255 and 312–314; that span reads GIT.

This sequence belongs to the succinate/malate CoA ligase beta subunit family. In terms of assembly, heterotetramer of two alpha and two beta subunits. The cofactor is Mg(2+).

It catalyses the reaction succinate + ATP + CoA = succinyl-CoA + ADP + phosphate. It carries out the reaction GTP + succinate + CoA = succinyl-CoA + GDP + phosphate. The protein operates within carbohydrate metabolism; tricarboxylic acid cycle; succinate from succinyl-CoA (ligase route): step 1/1. Functionally, succinyl-CoA synthetase functions in the citric acid cycle (TCA), coupling the hydrolysis of succinyl-CoA to the synthesis of either ATP or GTP and thus represents the only step of substrate-level phosphorylation in the TCA. The beta subunit provides nucleotide specificity of the enzyme and binds the substrate succinate, while the binding sites for coenzyme A and phosphate are found in the alpha subunit. This chain is Succinate--CoA ligase [ADP-forming] subunit beta, found in Staphylothermus marinus (strain ATCC 43588 / DSM 3639 / JCM 9404 / F1).